The sequence spans 305 residues: Flagellin FlaB2 (305 aa).

Positions 1–18 (MGLQKIVKKYNKKMKRKG) are cleaved as a propeptide — propeptide.

Belongs to the archaeal flagellin family. Glycosylated.

It localises to the archaeal flagellum. Functionally, flagellin is the subunit protein which polymerizes to form the filaments of archaeal flagella. The polypeptide is Flagellin FlaB2 (Saccharolobus shibatae (strain ATCC 51178 / DSM 5389 / JCM 8931 / NBRC 15437 / B12) (Sulfolobus shibatae)).